A 153-amino-acid chain; its full sequence is UPF0260 protein YcgN (153 aa).

The protein belongs to the UPF0260 family.

The polypeptide is UPF0260 protein YcgN (Shigella boydii serotype 18 (strain CDC 3083-94 / BS512)).